The primary structure comprises 431 residues: Tol-Pal system protein TolB (431 aa).

The first 26 residues, 1–26, serve as a signal peptide directing secretion; it reads MSLMTKLGFRALVASCLITAGSAANA. The interval 406 to 431 is disordered; sequence DGSAPPQILSVQGGSVREPSWGPFMQ.

Belongs to the TolB family. As to quaternary structure, the Tol-Pal system is composed of five core proteins: the inner membrane proteins TolA, TolQ and TolR, the periplasmic protein TolB and the outer membrane protein Pal. They form a network linking the inner and outer membranes and the peptidoglycan layer.

It is found in the periplasm. In terms of biological role, part of the Tol-Pal system, which plays a role in outer membrane invagination during cell division and is important for maintaining outer membrane integrity. The protein is Tol-Pal system protein TolB of Burkholderia orbicola (strain AU 1054).